A 418-amino-acid chain; its full sequence is Inward rectifier potassium channel 16 (418 aa).

Residues 1–67 (MSYYGSSYHI…VVDIFTTLVD (67 aa)) are Cytoplasmic-facing. A helical membrane pass occupies residues 68–94 (TKWRHMFVIFSLSYILSWLIFGSVFWL). Topologically, residues 95-117 (IAFHHGDLLNDPDITPCVDNVHS) are extracellular. Positions 118–134 (FTGAFLFSLETQTTIGY) form an intramembrane region, helical; Pore-forming. Residues 131–136 (TIGYGY) carry the Selectivity filter motif. Residues 135–143 (GYRCVTEEC) lie on the Extracellular side of the membrane. A helical transmembrane segment spans residues 144–171 (SVAVLMVILQSILSCIINTFIIGAALAK). The Cytoplasmic segment spans residues 172–418 (MATARKRAQT…LNRISVESQM (247 aa)). 2 positions are modified to phosphoserine: serine 373 and serine 375.

This sequence belongs to the inward rectifier-type potassium channel (TC 1.A.2.1) family. KCNJ16 subfamily. As to quaternary structure, it forms heteromeric channels with Kir4.1/KCNJ10; this interaction is required for KCNJ16 localization to the basolateral membrane in kidney cells. As a heteromer with KCNJ10, may interact with MAGI1; this interaction may facilitate KCNJ10/KCNJ16 potassium channel expression at the basolateral membrane in kidney cells. May form heteromers with Kir2.1/KCNJ2. Can form heteromeric channels with Kir4.2/KCNJ15. In terms of tissue distribution, widely expressed, with highest levels in adult and fetal kidney (at protein level). In the kidney, expressed in the proximal and distal convoluted tubules, but not in glomeruli nor collecting ducts.

Its subcellular location is the membrane. The protein localises to the basolateral cell membrane. It catalyses the reaction K(+)(in) = K(+)(out). With respect to regulation, channel activity is strongly regulated by variations of cytosolic pH; channels are activated by alkaline and inhibited by acidic pH values. Activated by phosphatidylinositol 4,5 biphosphate (PtdIns(4,5)P2). Its function is as follows. Inward rectifier potassium channels are characterized by a greater tendency to allow potassium to flow into the cell rather than out of it. Their voltage dependence is regulated by the concentration of extracellular potassium; as external potassium is raised, the voltage range of the channel opening shifts to more positive voltages. The inward rectification is mainly due to the blockage of outward current by internal magnesium. KCNJ16 may be involved in the regulation of fluid and pH balance. In the kidney, together with KCNJ10, mediates basolateral K(+) recycling in distal tubules; this process is critical for Na(+) reabsorption at the tubules. This is Inward rectifier potassium channel 16 (KCNJ16) from Homo sapiens (Human).